Here is a 676-residue protein sequence, read N- to C-terminus: Electrogenic aspartate/glutamate antiporter SLC25A13, mitochondrial (676 aa).

Alanine 2 is subject to N-acetylalanine. The tract at residues alanine 2 to proline 295 is regulatory N-terminal domain. Over alanine 2–arginine 332 the chain is Mitochondrial intermembrane. At lysine 18 the chain carries N6-acetyllysine. 4 EF-hand domains span residues serine 51–cysteine 86, alanine 87–histidine 122, glutamine 123–glutamate 157, and isoleucine 158–histidine 193. Positions 66, 68, 70, 72, and 77 each coordinate Ca(2+). The linker loop domain stretch occupies residues leucine 296–glutamine 311. A carrier domain region spans residues phenylalanine 322–glycine 613. 3 Solcar repeats span residues alanine 327 to lysine 419, valine 427 to serine 511, and valine 519 to tryptophan 607. The chain crosses the membrane as a helical span at residues phenylalanine 333–isoleucine 350. The Mitochondrial matrix portion of the chain corresponds to aspartate 351–arginine 393. An N6-acetyllysine mark is found at lysine 354 and lysine 373. A helical membrane pass occupies residues glycine 394–asparagine 413. Residues aspartate 414–glycine 436 are Mitochondrial intermembrane-facing. The chain crosses the membrane as a helical span at residues glycine 437–leucine 450. Residues glutamate 451–lysine 485 are Mitochondrial matrix-facing. Lysine 454 carries the N6-methyllysine modification. Lysine 485 is modified (N6-acetyllysine; alternate). Lysine 485 bears the N6-succinyllysine; alternate mark. Residues glycine 486–tyrosine 505 form a helical membrane-spanning segment. At alanine 506–leucine 524 the chain is on the mitochondrial intermembrane side. A helical membrane pass occupies residues leucine 525–alanine 542. Residues aspartate 543–lysine 581 lie on the Mitochondrial matrix side of the membrane. Position 581 is an N6-succinyllysine (lysine 581). Residues glycine 582–tyrosine 601 form a helical membrane-spanning segment. Residues glutamate 602–serine 676 lie on the Mitochondrial intermembrane side of the membrane. The interval glycine 614 to serine 676 is C-terminal domain. The residue at position 663 (lysine 663) is an N6-acetyllysine. Residue serine 667 is modified to Phosphoserine.

Belongs to the mitochondrial carrier (TC 2.A.29) family. In terms of assembly, homodimer (via N-terminus). In terms of tissue distribution, at 10.5 dpc, expressed in branchial arches, a well as in the limb and tail buds. At 13.5 dpc expression is predominant in epithelial structures and the forebrain, kidney and liver. Expression in liver is maintained into adulthood.

Its subcellular location is the mitochondrion inner membrane. It catalyses the reaction L-aspartate(in) + L-glutamate(out) + H(+)(out) = L-aspartate(out) + L-glutamate(in) + H(+)(in). The catalysed reaction is 3-sulfino-L-alanine(out) + L-glutamate(in) + H(+)(in) = 3-sulfino-L-alanine(in) + L-glutamate(out) + H(+)(out). The enzyme catalyses 3-sulfino-L-alanine(out) + L-aspartate(in) = 3-sulfino-L-alanine(in) + L-aspartate(out). Functionally, mitochondrial electrogenic aspartate/glutamate antiporter that favors efflux of aspartate and entry of glutamate and proton within the mitochondria as part of the malate-aspartate shuttle. Also mediates the uptake of L-cysteinesulfinate (3-sulfino-L-alanine) by mitochondria in exchange of L-glutamate and proton. Can also exchange L-cysteinesulfinate with aspartate in their anionic form without any proton translocation. Lacks transport activity towards gamma-aminobutyric acid (GABA). The polypeptide is Electrogenic aspartate/glutamate antiporter SLC25A13, mitochondrial (Mus musculus (Mouse)).